A 459-amino-acid chain; its full sequence is Limonoid 7-O-acetyltransferse (459 aa).

Residues His167 and Asp391 each act as proton acceptor in the active site.

It belongs to the plant acyltransferase family. Monomer. As to expression, expressed in maturing fruits and in juice vesicles.

The enzyme catalyses (1S)-1-acetoxy-luvungin A + acetyl-CoA = (1S)-1,7-diacetoxy-luvungin A + CoA. It participates in secondary metabolite biosynthesis; terpenoid biosynthesis. In terms of biological role, acetyltransferase involved in the biosynthesis of limonoids triterpene natural products such as limonin, a compound with insecticidal activity responsible for the bitter taste in citrus. Catalyzes the formation of (1S)-1,7-diacetoxy-luvungin A from (1S)-1-acetoxy-luvungin A. The protein is Limonoid 7-O-acetyltransferse of Citrus sinensis (Sweet orange).